Consider the following 440-residue polypeptide: Thymidine phosphorylase (440 aa).

The protein belongs to the thymidine/pyrimidine-nucleoside phosphorylase family. In terms of assembly, homodimer.

It carries out the reaction thymidine + phosphate = 2-deoxy-alpha-D-ribose 1-phosphate + thymine. The protein operates within pyrimidine metabolism; dTMP biosynthesis via salvage pathway; dTMP from thymine: step 1/2. Functionally, the enzymes which catalyze the reversible phosphorolysis of pyrimidine nucleosides are involved in the degradation of these compounds and in their utilization as carbon and energy sources, or in the rescue of pyrimidine bases for nucleotide synthesis. This Escherichia coli O139:H28 (strain E24377A / ETEC) protein is Thymidine phosphorylase.